Consider the following 632-residue polypeptide: tRNA uridine 5-carboxymethylaminomethyl modification enzyme MnmG (632 aa).

FAD is bound by residues 15–20 (GAGHAG), Ile-127, and Ser-182. NAD(+) is bound at residue 276 to 290 (GPRYCPSIEDKIVRF). Gln-373 contacts FAD.

Belongs to the MnmG family. Homodimer. Heterotetramer of two MnmE and two MnmG subunits. It depends on FAD as a cofactor.

It localises to the cytoplasm. Its function is as follows. NAD-binding protein involved in the addition of a carboxymethylaminomethyl (cmnm) group at the wobble position (U34) of certain tRNAs, forming tRNA-cmnm(5)s(2)U34. This chain is tRNA uridine 5-carboxymethylaminomethyl modification enzyme MnmG, found in Streptococcus pyogenes serotype M2 (strain MGAS10270).